Reading from the N-terminus, the 318-residue chain is Transcription factor MYBS3 (318 aa).

2 disordered regions span residues 1–20 (MTRRCSHCSHNGHNSRTCPN) and 50–98 (AAGS…PWTE). Residues 3-20 (RRCSHCSHNGHNSRTCPN) form a CCHC-type zinc finger. Positions 8–18 (CSHNGHNSRTC) are enriched in polar residues. Positions 50 to 77 (AAGSTSGGASPADGPDAAPTAADGYASD) are enriched in low complexity. The region spanning 88 to 144 (RDRKKGVPWTEEEHRRFLLGLQKLGKGDWRGISRNFVVSRTPTQVASHAQKYFIRQS) is the HTH myb-type domain. A DNA-binding region (H-T-H motif) is located at residues 116–140 (WRGISRNFVVSRTPTQVASHAQKYF). The tract at residues 159–200 (VPDESMDLPPLPGGQEPETQVLNQPALPPPREEEEVDSMESD) is disordered.

As to expression, expressed in all tissues, with the highest level in senescent leaves.

The protein localises to the nucleus. Transcription repressor that binds to 5'-TATCCA-3' elements in gene promoters. Contributes to the sugar-repressed transcription of promoters containing SRS or 5'-TATCCA-3' elements. Transcription repressor involved in a cold stress response pathway that confers cold tolerance. Suppresses the DREB1-dependent signaling pathway under prolonged cold stress. DREB1 responds quickly and transiently while MYBS3 responds slowly to cold stress. They may act sequentially and complementarily for adaptation to short- and long-term cold stress. This is Transcription factor MYBS3 from Oryza sativa subsp. japonica (Rice).